The primary structure comprises 305 residues: Glycine--tRNA ligase alpha subunit (305 aa).

Belongs to the class-II aminoacyl-tRNA synthetase family. In terms of assembly, tetramer of two alpha and two beta subunits.

The protein resides in the cytoplasm. It carries out the reaction tRNA(Gly) + glycine + ATP = glycyl-tRNA(Gly) + AMP + diphosphate. The polypeptide is Glycine--tRNA ligase alpha subunit (Ligilactobacillus salivarius (strain UCC118) (Lactobacillus salivarius)).